Reading from the N-terminus, the 169-residue chain is Short form salivary protein D7R3 (169 aa).

The signal sequence occupies residues 1–21 (MFGKLLPCAILVWCLFSLGQA). 3 disulfides stabilise this stretch: Cys-30–Cys-62, Cys-43–Cys-168, and Cys-101–Cys-120. The noradrenaline site is built by Glu-31 and Arg-46. Glu-31 serves as a coordination point for serotonin. 4 residues coordinate serotonin: His-59, Tyr-118, Asp-135, and Glu-138. Tyr-118, Asp-135, and Glu-138 together coordinate histamine. Residues Asp-135 and Glu-138 each coordinate noradrenaline.

Belongs to the PBP/GOBP family. In terms of tissue distribution, female saliva (at protein level). Female salivary gland. Low-level expression in female carcass without salivary glands. Not detected in male tissues.

The protein resides in the secreted. In terms of biological role, modulates blood feeding of female mosquitoes on vertebrate species by binding and sequestering different mediators involved in the host response. Binds serotonin, noradrenaline, histamine and adrenaline. Inhibits histamine-, serotonin- and noradrenaline-induced smooth muscle contraction. Exhibits vasodilating activity. The polypeptide is Short form salivary protein D7R3 (Anopheles gambiae (African malaria mosquito)).